We begin with the raw amino-acid sequence, 83 residues long: Small ribosomal subunit protein bS18 (83 aa).

The protein belongs to the bacterial ribosomal protein bS18 family. As to quaternary structure, part of the 30S ribosomal subunit. Forms a tight heterodimer with protein bS6.

In terms of biological role, binds as a heterodimer with protein bS6 to the central domain of the 16S rRNA, where it helps stabilize the platform of the 30S subunit. The polypeptide is Small ribosomal subunit protein bS18 (Desulfosudis oleivorans (strain DSM 6200 / JCM 39069 / Hxd3) (Desulfococcus oleovorans)).